Consider the following 299-residue polypeptide: Protein sprouty homolog 4 (299 aa).

The residue at position 1 (Met-1) is an N-acetylmethionine. Disordered regions lie at residues 55-79 (NPSL…PTPA) and 92-126 (FSGR…QASP). Low complexity predominate over residues 92–107 (FSGRPSSVSSSSSTSS). Phosphoserine is present on Ser-125. Residues 166-273 (KCKECASPRT…GYDRLRRPGC (108 aa)) form the SPR domain. The segment at 181–299 (VCNQECLCSA…AKTSRPDKPF (119 aa)) is required for interaction with TESK1. Required for colocalization with TESK1 at vesicular spots in the cytoplasm and inhibition of TESK1 kinase activity, resulting in inhibition of cell spreading.

This sequence belongs to the sprouty family. Interacts (via C-terminus) with TESK1 (via both C- and N-termini); the interaction inhibits TESK1 kinase activity. Interacts with RAF1. Interacts with CAV1 (via C-terminus).

It is found in the cytoplasm. The protein resides in the cell projection. Its subcellular location is the ruffle membrane. Functionally, suppresses the insulin receptor and EGFR-transduced MAPK signaling pathway, but does not inhibit MAPK activation by a constitutively active mutant Ras. Probably impairs the formation of GTP-Ras. Inhibits Ras-independent, but not Ras-dependent, activation of RAF1. Represses integrin-mediated cell spreading via inhibition of TESK1-mediated phosphorylation of cofilin. The chain is Protein sprouty homolog 4 (SPRY4) from Homo sapiens (Human).